A 265-amino-acid polypeptide reads, in one-letter code: Glutamate racemase 2 (265 aa).

Substrate is bound by residues 7–8 and 39–40; these read DS and YG. Cys-70 acts as the Proton donor/acceptor in catalysis. 71–72 serves as a coordination point for substrate; it reads NT. The Proton donor/acceptor role is filled by Cys-182. Position 183–184 (183–184) interacts with substrate; the sequence is TH.

The protein belongs to the aspartate/glutamate racemases family.

It carries out the reaction L-glutamate = D-glutamate. It participates in cell wall biogenesis; peptidoglycan biosynthesis. Functionally, provides the (R)-glutamate required for cell wall biosynthesis. The polypeptide is Glutamate racemase 2 (yrpC) (Bacillus subtilis (strain 168)).